Reading from the N-terminus, the 439-residue chain is Protein disulfide-isomerase A6 (439 aa).

The N-terminal stretch at 1–19 (MARLGFGLVSCTFFLAASG) is a signal peptide. 2 Thioredoxin domains span residues 20 to 133 (LYSS…ALRQ) and 151 to 287 (QGRG…EDVA). Active-site nucleophile residues include cysteine 55 and cysteine 58. A disulfide bridge connects residues cysteine 55 and cysteine 58. Phosphoserine occurs at positions 129, 156, and 158. The interval 141–160 (GRSGGYSSGKQGRGDSSSKK) is disordered. Catalysis depends on nucleophile residues cysteine 190 and cysteine 193. Residues cysteine 190 and cysteine 193 are joined by a disulfide bond. The interval 400–425 (GSFPAITAREPWDGRDGELPVEDDID) is disordered. A Phosphoserine modification is found at serine 427. The Prevents secretion from ER motif lies at 436–439 (KDEL).

The protein belongs to the protein disulfide isomerase family. As to quaternary structure, part of a large chaperone multiprotein complex comprising DNAJB11, HSP90B1, HSPA5, HYOU, PDIA2, PDIA4, PDIA6, PPIB, SDF2L1, UGGT1 and very small amounts of ERP29, but not, or at very low levels, CALR nor CANX. Interacts with MICA on the surface of tumor cells, leading to MICA disulfide bond reduction which is required for its release from tumor cells. Interacts with ITGB3 following platelet stimulation. Interacts with ERN1; the interaction is direct. Interacts with EIF2AK3. As to expression, expressed most abundantly in lung and kidney, followed by heart, liver and brain.

Its subcellular location is the endoplasmic reticulum lumen. The protein localises to the cell membrane. It localises to the melanosome. The catalysed reaction is Catalyzes the rearrangement of -S-S- bonds in proteins.. Functionally, may function as a chaperone that inhibits aggregation of misfolded proteins. Negatively regulates the unfolded protein response (UPR) through binding to UPR sensors such as ERN1, which in turn inactivates ERN1 signaling. May also regulate the UPR via the EIF2AK3 UPR sensor. Plays a role in platelet aggregation and activation by agonists such as convulxin, collagen and thrombin. The protein is Protein disulfide-isomerase A6 (PDIA6) of Mesocricetus auratus (Golden hamster).